We begin with the raw amino-acid sequence, 1606 residues long: Pentafunctional AROM polypeptide (1606 aa).

The 3-dehydroquinate synthase stretch occupies residues 1–390 (MANADVLKVS…YEPKATVVPD (390 aa)). NAD(+) contacts are provided by residues 45–47 (DTN), 85–88 (ETSK), 116–118 (GGV), and D121. Residue R132 participates in 7-phospho-2-dehydro-3-deoxy-D-arabino-heptonate binding. Residue 141 to 142 (TT) coordinates NAD(+). 7-phospho-2-dehydro-3-deoxy-D-arabino-heptonate contacts are provided by D148 and K154. NAD(+) is bound at residue K163. N164 lines the 7-phospho-2-dehydro-3-deoxy-D-arabino-heptonate pocket. NAD(+)-binding positions include 181 to 184 (FLET) and N192. Position 196 (E196) interacts with Zn(2+). 7-phospho-2-dehydro-3-deoxy-D-arabino-heptonate-binding positions include 196–199 (EVVK) and K256. Catalysis depends on E266, which acts as the Proton acceptor; for 3-dehydroquinate synthase activity. 7-phospho-2-dehydro-3-deoxy-D-arabino-heptonate contacts are provided by residues 270–274 (RNLVN) and H277. H277 is a Zn(2+) binding site. Residue H281 is the Proton acceptor; for 3-dehydroquinate synthase activity of the active site. Residues H293 and K362 each coordinate 7-phospho-2-dehydro-3-deoxy-D-arabino-heptonate. A Zn(2+)-binding site is contributed by H293. The tract at residues 403–850 (VIPGVPRHHP…WDDLENKIGL (448 aa)) is EPSP synthase. The active-site For EPSP synthase activity is C832. Positions 875-1070 (AASIILIGMR…TSGRRSYFLC (196 aa)) are shikimate kinase. Residue 882–889 (GMRGTGKT) participates in ATP binding. Residues 1071-1296 (LTYPDVTQSF…AAPGQLSFKQ (226 aa)) form a 3-dehydroquinase region. Residue H1198 is the Proton acceptor; for 3-dehydroquinate dehydratase activity of the active site. The active-site Schiff-base intermediate with substrate; for 3-dehydroquinate dehydratase activity is the K1226. The shikimate dehydrogenase stretch occupies residues 1309–1606 (AQRFYLFGTP…QFVFEEECES (298 aa)).

It in the N-terminal section; belongs to the sugar phosphate cyclases superfamily. Dehydroquinate synthase family. In the 2nd section; belongs to the EPSP synthase family. The protein in the 3rd section; belongs to the shikimate kinase family. This sequence in the 4th section; belongs to the type-I 3-dehydroquinase family. It in the C-terminal section; belongs to the shikimate dehydrogenase family. In terms of assembly, homodimer. It depends on Zn(2+) as a cofactor.

Its subcellular location is the cytoplasm. It catalyses the reaction 7-phospho-2-dehydro-3-deoxy-D-arabino-heptonate = 3-dehydroquinate + phosphate. It carries out the reaction 3-dehydroquinate = 3-dehydroshikimate + H2O. The enzyme catalyses shikimate + NADP(+) = 3-dehydroshikimate + NADPH + H(+). The catalysed reaction is shikimate + ATP = 3-phosphoshikimate + ADP + H(+). It catalyses the reaction 3-phosphoshikimate + phosphoenolpyruvate = 5-O-(1-carboxyvinyl)-3-phosphoshikimate + phosphate. The protein operates within metabolic intermediate biosynthesis; chorismate biosynthesis; chorismate from D-erythrose 4-phosphate and phosphoenolpyruvate: step 2/7. Its pathway is metabolic intermediate biosynthesis; chorismate biosynthesis; chorismate from D-erythrose 4-phosphate and phosphoenolpyruvate: step 3/7. It participates in metabolic intermediate biosynthesis; chorismate biosynthesis; chorismate from D-erythrose 4-phosphate and phosphoenolpyruvate: step 4/7. It functions in the pathway metabolic intermediate biosynthesis; chorismate biosynthesis; chorismate from D-erythrose 4-phosphate and phosphoenolpyruvate: step 5/7. The protein operates within metabolic intermediate biosynthesis; chorismate biosynthesis; chorismate from D-erythrose 4-phosphate and phosphoenolpyruvate: step 6/7. The AROM polypeptide catalyzes 5 consecutive enzymatic reactions in prechorismate polyaromatic amino acid biosynthesis. This is Pentafunctional AROM polypeptide from Laccaria bicolor (strain S238N-H82 / ATCC MYA-4686) (Bicoloured deceiver).